A 107-amino-acid chain; its full sequence is MVNFNQFLKQAQSMQKKMQEAQEQMANARYTGKAGGGLVEIIITGKGEVAKISIDESLLKSEEKEMLEDLIKVAFNDAKQKCDEDSQNSLSGALNGMSLPPGFKMPF.

The protein belongs to the YbaB/EbfC family. Homodimer.

The protein localises to the cytoplasm. It localises to the nucleoid. Binds to DNA and alters its conformation. May be involved in regulation of gene expression, nucleoid organization and DNA protection. This chain is Nucleoid-associated protein A1C_06705, found in Rickettsia akari (strain Hartford).